The primary structure comprises 170 residues: Mitotic-spindle organizing protein 2B (170 aa).

Disordered stretches follow at residues 1 to 26 (MSRGQTEGSQAMASSQAAGPGPSPDA) and 102 to 170 (SADS…GSST). Over residues 8–20 (GSQAMASSQAAGP) the composition is skewed to low complexity. The span at 123–132 (PNPTTSTTQG) shows a compositional bias: polar residues. Residues 151 to 170 (SGSRMQKSSSSGKSSGGSST) show a composition bias toward low complexity.

This sequence belongs to the MOZART2 family. In terms of assembly, part of the gamma-tubulin complex. Interacts with TUBG1.

It localises to the cytoplasm. Its subcellular location is the cytoskeleton. The protein resides in the microtubule organizing center. The protein localises to the centrosome. It is found in the spindle. This is Mitotic-spindle organizing protein 2B (mzt2b) from Xenopus tropicalis (Western clawed frog).